We begin with the raw amino-acid sequence, 353 residues long: Guanine nucleotide-binding protein alpha-1 subunit (353 aa).

A lipid anchor (N-myristoyl glycine) is attached at Gly-2. Cys-3 is lipidated: S-palmitoyl cysteine. One can recognise a G-alpha domain in the interval 32 to 353 (NEIKMLLLGA…QVNLRDCGLL (322 aa)). Residues 35–48 (KMLLLGAGESGKST) are G1 motif. GTP is bound by residues Glu-43, Ser-44, Gly-45, Lys-46, Ser-47, Thr-48, Asp-150, Leu-175, Thr-181, Gly-203, Asn-269, Lys-270, Asp-272, and Ala-325. Residue Ser-47 coordinates Mg(2+). The tract at residues 173–181 (DVLRSRVKT) is G2 motif. Thr-181 serves as a coordination point for Mg(2+). The tract at residues 196-205 (YKLFDVGGQR) is G3 motif. A G4 motif region spans residues 265-272 (ILFLNKID). The segment at 323–328 (TCATDT) is G5 motif.

This sequence belongs to the G-alpha family. As to quaternary structure, g proteins are composed of 3 units; alpha, beta and gamma. The alpha chain contains the guanine nucleotide binding site. It depends on Mg(2+) as a cofactor.

Functionally, guanine nucleotide-binding proteins (G proteins) are involved as modulators or transducers in various transmembrane signaling systems. In Mycosarcoma maydis (Corn smut fungus), this protein is Guanine nucleotide-binding protein alpha-1 subunit (GPA1).